We begin with the raw amino-acid sequence, 71 residues long: ATP synthase subunit c (71 aa).

2 helical membrane passes run 9–29 (MIGYGLAAIGSAIGVGLIFAA) and 49–69 (LLGFALAEALAILGLVFAFVI).

This sequence belongs to the ATPase C chain family. In terms of assembly, F-type ATPases have 2 components, F(1) - the catalytic core - and F(0) - the membrane proton channel. F(1) has five subunits: alpha(3), beta(3), gamma(1), delta(1), epsilon(1). F(0) has three main subunits: a(1), b(2) and c(10-14). The alpha and beta chains form an alternating ring which encloses part of the gamma chain. F(1) is attached to F(0) by a central stalk formed by the gamma and epsilon chains, while a peripheral stalk is formed by the delta and b chains.

Its subcellular location is the cell membrane. F(1)F(0) ATP synthase produces ATP from ADP in the presence of a proton or sodium gradient. F-type ATPases consist of two structural domains, F(1) containing the extramembraneous catalytic core and F(0) containing the membrane proton channel, linked together by a central stalk and a peripheral stalk. During catalysis, ATP synthesis in the catalytic domain of F(1) is coupled via a rotary mechanism of the central stalk subunits to proton translocation. Its function is as follows. Key component of the F(0) channel; it plays a direct role in translocation across the membrane. A homomeric c-ring of between 10-14 subunits forms the central stalk rotor element with the F(1) delta and epsilon subunits. This chain is ATP synthase subunit c, found in Micrococcus luteus (strain ATCC 4698 / DSM 20030 / JCM 1464 / CCM 169 / CCUG 5858 / IAM 1056 / NBRC 3333 / NCIMB 9278 / NCTC 2665 / VKM Ac-2230) (Micrococcus lysodeikticus).